The sequence spans 285 residues: 4-hydroxybenzoate octaprenyltransferase (285 aa).

The next 7 helical transmembrane spans lie at 20–39, 92–112, 137–157, 159–179, 206–226, 228–248, and 260–280; these read GSYL…AQGL, ALGL…ALNW, FPQV…FMAV, EAVP…TVAY, YDRL…LGMG, YLGF…LFIH, and ACFS…LGIA.

The protein belongs to the UbiA prenyltransferase family. The cofactor is Mg(2+).

It localises to the cell inner membrane. The catalysed reaction is all-trans-octaprenyl diphosphate + 4-hydroxybenzoate = 4-hydroxy-3-(all-trans-octaprenyl)benzoate + diphosphate. Its pathway is cofactor biosynthesis; ubiquinone biosynthesis. Catalyzes the prenylation of para-hydroxybenzoate (PHB) with an all-trans polyprenyl group. Mediates the second step in the final reaction sequence of ubiquinone-8 (UQ-8) biosynthesis, which is the condensation of the polyisoprenoid side chain with PHB, generating the first membrane-bound Q intermediate 3-octaprenyl-4-hydroxybenzoate. This is 4-hydroxybenzoate octaprenyltransferase from Pseudoalteromonas atlantica (strain T6c / ATCC BAA-1087).